The primary structure comprises 412 residues: Putative competence-damage inducible protein (412 aa).

This sequence belongs to the CinA family.

The chain is Putative competence-damage inducible protein from Bacillus mycoides (strain KBAB4) (Bacillus weihenstephanensis).